Reading from the N-terminus, the 426-residue chain is Maintenance of mitochondrial morphology protein 1 (426 aa).

Residues 1-100 (MTDSENESTE…KFSGWSFAQG (100 aa)) are Lumenal-facing. Residues 101–121 (FFVGQLSIVLLFIFFLKFFIF) traverse the membrane as a helical segment. Over 122–426 (SDEPSKSKNP…NTREEKPTEL (305 aa)) the chain is Cytoplasmic. Residues 194–409 (PAESLDWFNV…EPRFQFVRLP (216 aa)) enclose the SMP-LTD domain.

This sequence belongs to the MMM1 family. As to quaternary structure, homodimer. Component of the ER-mitochondria encounter structure (ERMES) or MDM complex, composed of MMM1, MDM10, MDM12 and MDM34. An MMM1 homodimer associates with one molecule of MDM12 on each side in a pairwise head-to-tail manner, and the SMP-LTD domains of MMM1 and MDM12 generate a continuous hydrophobic tunnel for phospholipid trafficking.

Its subcellular location is the endoplasmic reticulum membrane. Functionally, component of the ERMES/MDM complex, which serves as a molecular tether to connect the endoplasmic reticulum (ER) and mitochondria. Components of this complex are involved in the control of mitochondrial shape and protein biogenesis, and function in nonvesicular lipid trafficking between the ER and mitochondria. The MDM12-MMM1 subcomplex functions in the major beta-barrel assembly pathway that is responsible for biogenesis of all outer membrane beta-barrel proteins, and acts in a late step after the SAM complex. The MDM10-MDM12-MMM1 subcomplex further acts in the TOM40-specific pathway after the action of the MDM12-MMM1 complex. Essential for establishing and maintaining the structure of mitochondria and maintenance of mtDNA nucleoids. The sequence is that of Maintenance of mitochondrial morphology protein 1 from Saccharomyces cerevisiae (strain AWRI1631) (Baker's yeast).